Here is a 164-residue protein sequence, read N- to C-terminus: Small ribosomal subunit protein uS5 (164 aa).

The S5 DRBM domain occupies 10–73 (LEERVVAINR…EDAKKNLIEV (64 aa)).

This sequence belongs to the universal ribosomal protein uS5 family. As to quaternary structure, part of the 30S ribosomal subunit. Contacts proteins S4 and S8.

In terms of biological role, with S4 and S12 plays an important role in translational accuracy. Its function is as follows. Located at the back of the 30S subunit body where it stabilizes the conformation of the head with respect to the body. This chain is Small ribosomal subunit protein uS5, found in Streptococcus gordonii (strain Challis / ATCC 35105 / BCRC 15272 / CH1 / DL1 / V288).